Reading from the N-terminus, the 159-residue chain is 2-C-methyl-D-erythritol 2,4-cyclodiphosphate synthase (159 aa).

Aspartate 8 and histidine 10 together coordinate a divalent metal cation. 4-CDP-2-C-methyl-D-erythritol 2-phosphate is bound by residues 8 to 10 (DVH) and 34 to 35 (HS). Histidine 42 contributes to the a divalent metal cation binding site. 4-CDP-2-C-methyl-D-erythritol 2-phosphate contacts are provided by residues 56-58 (DIG), 61-65 (FPDTD), 100-106 (AQAPRML), 132-135 (TTTE), phenylalanine 139, and arginine 142.

Belongs to the IspF family. As to quaternary structure, homotrimer. A divalent metal cation serves as cofactor.

The catalysed reaction is 4-CDP-2-C-methyl-D-erythritol 2-phosphate = 2-C-methyl-D-erythritol 2,4-cyclic diphosphate + CMP. It functions in the pathway isoprenoid biosynthesis; isopentenyl diphosphate biosynthesis via DXP pathway; isopentenyl diphosphate from 1-deoxy-D-xylulose 5-phosphate: step 4/6. Functionally, involved in the biosynthesis of isopentenyl diphosphate (IPP) and dimethylallyl diphosphate (DMAPP), two major building blocks of isoprenoid compounds. Catalyzes the conversion of 4-diphosphocytidyl-2-C-methyl-D-erythritol 2-phosphate (CDP-ME2P) to 2-C-methyl-D-erythritol 2,4-cyclodiphosphate (ME-CPP) with a corresponding release of cytidine 5-monophosphate (CMP). This Escherichia coli O6:K15:H31 (strain 536 / UPEC) protein is 2-C-methyl-D-erythritol 2,4-cyclodiphosphate synthase.